A 276-amino-acid polypeptide reads, in one-letter code: Large ribosomal subunit protein uL2 (276 aa).

The disordered stretch occupies residues 212-276 (NRHRGIRPQT…KLIISRKKHK (65 aa)). Positions 257-276 (YKTRKKKASDKLIISRKKHK) are enriched in basic residues.

The protein belongs to the universal ribosomal protein uL2 family. As to quaternary structure, part of the 50S ribosomal subunit. Forms a bridge to the 30S subunit in the 70S ribosome.

In terms of biological role, one of the primary rRNA binding proteins. Required for association of the 30S and 50S subunits to form the 70S ribosome, for tRNA binding and peptide bond formation. It has been suggested to have peptidyltransferase activity; this is somewhat controversial. Makes several contacts with the 16S rRNA in the 70S ribosome. The chain is Large ribosomal subunit protein uL2 from Helicobacter pylori (strain P12).